Here is a 135-residue protein sequence, read N- to C-terminus: DGLKLNYLRISEAKLTGIPKDLPETLNELHLDHNKIQAIELEDLLRYSKLYRLGLGHNQIRMIENGSLSFLPTLRELHLDNNKLSRVPAGLPDLKLLQVVYLHSNNITKVGVNDFCPVGFGVKRAYYNGISLFNN.

LRR repeat units follow at residues 4-24 (KLNY…DLPE), 25-46 (TLNE…DLLR), 49-72 (KLYR…SFLP), 73-95 (TLRE…PDLK), and 96-117 (LLQV…DFCP). Asn65 carries N-linked (GlcNAc...) asparagine glycosylation. An N-linked (GlcNAc...) asparagine glycan is attached at Asn106.

Belongs to the small leucine-rich proteoglycan (SLRP) family. SLRP class I subfamily. As to quaternary structure, homodimer. Forms a ternary complex with MFAP2 and ELN. In terms of processing, the two attached glycosaminoglycan chains can be either chondroitin sulfate or dermatan sulfate. In terms of tissue distribution, found in several connective tissues, especially in articular cartilages.

It is found in the secreted. The protein localises to the extracellular space. The protein resides in the extracellular matrix. Its function is as follows. May be involved in collagen fiber assembly. The chain is Biglycan (BGN) from Oryctolagus cuniculus (Rabbit).